Here is a 335-residue protein sequence, read N- to C-terminus: NADH-quinone oxidoreductase subunit H (335 aa).

The next 8 helical transmembrane spans lie at 12–32 (IIAVVKAIVVLLAVVVCGALL), 81–101 (VIFTLAPVVAMSALLIAFAVI), 114–134 (IGLLFFFAMAGLSVYAVLFAG), 154–174 (VSYEVFMGLALMGIVVQVGSF), 187–207 (LWFIIPQFFGFCTFFIAGVAV), 238–258 (FFVGEYIGIILISALLVTLFF), 270–290 (SLAFFWFALKTAFFIMLFILL), and 307–327 (WKFCLPLTLINLLVTAAIVLL).

The protein belongs to the complex I subunit 1 family. As to quaternary structure, NDH-1 is composed of 13 different subunits. Subunits NuoA, H, J, K, L, M, N constitute the membrane sector of the complex.

The protein resides in the cell inner membrane. It catalyses the reaction a quinone + NADH + 5 H(+)(in) = a quinol + NAD(+) + 4 H(+)(out). Its function is as follows. NDH-1 shuttles electrons from NADH, via FMN and iron-sulfur (Fe-S) centers, to quinones in the respiratory chain. The immediate electron acceptor for the enzyme in this species is believed to be ubiquinone. Couples the redox reaction to proton translocation (for every two electrons transferred, four hydrogen ions are translocated across the cytoplasmic membrane), and thus conserves the redox energy in a proton gradient. This subunit may bind ubiquinone. This chain is NADH-quinone oxidoreductase subunit H, found in Pseudomonas syringae pv. syringae (strain B728a).